The chain runs to 287 residues: mRNA-capping enzyme small subunit (287 aa).

Heterodimer of a large and a small subunit.

It localises to the virion. It carries out the reaction a 5'-end (5'-triphosphoguanosine)-ribonucleoside in mRNA + S-adenosyl-L-methionine = a 5'-end (N(7)-methyl 5'-triphosphoguanosine)-ribonucleoside in mRNA + S-adenosyl-L-homocysteine. Its function is as follows. Catalyzes the last reaction in the mRNA cap formation pathway. This is mRNA-capping enzyme small subunit from Erythrocebus patas (Red guenon).